Consider the following 829-residue polypeptide: Probable beta-glucosidase H (829 aa).

N-linked (GlcNAc...) asparagine glycosylation is present at asparagine 13. Aspartate 225 is an active-site residue. Asparagine 304, asparagine 473, asparagine 602, asparagine 627, and asparagine 664 each carry an N-linked (GlcNAc...) asparagine glycan. Residues 389–548 (RMLSNAVIHF…DPEQMVANAV (160 aa)) form the PA14 domain.

Belongs to the glycosyl hydrolase 3 family.

It localises to the secreted. It catalyses the reaction Hydrolysis of terminal, non-reducing beta-D-glucosyl residues with release of beta-D-glucose.. The protein operates within glycan metabolism; cellulose degradation. In terms of biological role, beta-glucosidases are one of a number of cellulolytic enzymes involved in the degradation of cellulosic biomass. Catalyzes the last step releasing glucose from the inhibitory cellobiose. The polypeptide is Probable beta-glucosidase H (bglH) (Neosartorya fischeri (strain ATCC 1020 / DSM 3700 / CBS 544.65 / FGSC A1164 / JCM 1740 / NRRL 181 / WB 181) (Aspergillus fischerianus)).